A 352-amino-acid polypeptide reads, in one-letter code: Photosystem II D2 protein (352 aa).

Residues 40-60 form a helical membrane-spanning segment; it reads TAYLALGGWLTGTTFVTSWYT. His117 is a binding site for chlorophyll a. The helical transmembrane segment at 124-140 threads the bilayer; it reads GFMLRQFEIARLVGIRP. Gln129 and Asn142 together coordinate pheophytin a. The helical transmembrane segment at 152–165 threads the bilayer; that stretch reads VFVSVFLIYPLGQS. Residue His197 coordinates chlorophyll a. A helical transmembrane segment spans residues 207–227; it reads GALLCAIHGATVENTLFEDGE. Positions 214 and 261 each coordinate a plastoquinone. Residue His214 coordinates Fe cation. His268 contributes to the Fe cation binding site. A helical membrane pass occupies residues 278–294; it reads GLWTSSIGIIGLALNLR.

This sequence belongs to the reaction center PufL/M/PsbA/D family. In terms of assembly, PSII is composed of 1 copy each of membrane proteins PsbA, PsbB, PsbC, PsbD, PsbE, PsbF, PsbH, PsbI, PsbJ, PsbK, PsbL, PsbM, PsbT, PsbX, PsbY, PsbZ, Psb30/Ycf12, at least 3 peripheral proteins of the oxygen-evolving complex and a large number of cofactors. It forms dimeric complexes. The D1/D2 heterodimer binds P680, chlorophylls that are the primary electron donor of PSII, and subsequent electron acceptors. It shares a non-heme iron and each subunit binds pheophytin, quinone, additional chlorophylls, carotenoids and lipids. There is also a Cl(-1) ion associated with D1 and D2, which is required for oxygen evolution. The PSII complex binds additional chlorophylls, carotenoids and specific lipids. serves as cofactor.

The protein localises to the plastid. It is found in the organellar chromatophore thylakoid membrane. It carries out the reaction 2 a plastoquinone + 4 hnu + 2 H2O = 2 a plastoquinol + O2. Its function is as follows. Photosystem II (PSII) is a light-driven water:plastoquinone oxidoreductase that uses light energy to abstract electrons from H(2)O, generating O(2) and a proton gradient subsequently used for ATP formation. It consists of a core antenna complex that captures photons, and an electron transfer chain that converts photonic excitation into a charge separation. The D1/D2 (PsbA/PsbD) reaction center heterodimer binds P680, the primary electron donor of PSII as well as several subsequent electron acceptors. D2 is needed for assembly of a stable PSII complex. This chain is Photosystem II D2 protein, found in Paulinella chromatophora.